A 257-amino-acid polypeptide reads, in one-letter code: Phosphate import ATP-binding protein PstB (257 aa).

Residues I11 to I252 form the ABC transporter domain. G43–S50 contributes to the ATP binding site.

This sequence belongs to the ABC transporter superfamily. Phosphate importer (TC 3.A.1.7) family. The complex is composed of two ATP-binding proteins (PstB), two transmembrane proteins (PstC and PstA) and a solute-binding protein (PstS).

It is found in the cell inner membrane. The enzyme catalyses phosphate(out) + ATP + H2O = ADP + 2 phosphate(in) + H(+). Its function is as follows. Part of the ABC transporter complex PstSACB involved in phosphate import. Responsible for energy coupling to the transport system. The polypeptide is Phosphate import ATP-binding protein PstB (Salmonella paratyphi A (strain ATCC 9150 / SARB42)).